A 571-amino-acid polypeptide reads, in one-letter code: Glutamine--tRNA ligase (571 aa).

A 'HIGH' region motif is present at residues 35–45; that stretch reads PEPNGYLHIGH. ATP is bound by residues 36-38 and 42-48; these read EPN and HIGHAKS. Residues Asp-68 and Tyr-213 each coordinate L-glutamine. ATP is bound by residues Thr-232, 262–263, and 270–272; these read RL and LSK. Residues 269 to 273 carry the 'KMSKS' region motif; the sequence is ILSKR.

Belongs to the class-I aminoacyl-tRNA synthetase family. As to quaternary structure, monomer.

The protein resides in the cytoplasm. It carries out the reaction tRNA(Gln) + L-glutamine + ATP = L-glutaminyl-tRNA(Gln) + AMP + diphosphate. This is Glutamine--tRNA ligase from Buchnera aphidicola subsp. Acyrthosiphon pisum (strain Tuc7).